Reading from the N-terminus, the 404-residue chain is Probable tRNA sulfurtransferase (404 aa).

One can recognise a THUMP domain in the interval 60-165 (RSVIEALKPV…DEAAYLSHED (106 aa)). ATP-binding positions include 183–184 (ML), 208–209 (HF), Arg-265, Gly-287, and Gln-296.

Belongs to the ThiI family.

It is found in the cytoplasm. It carries out the reaction [ThiI sulfur-carrier protein]-S-sulfanyl-L-cysteine + a uridine in tRNA + 2 reduced [2Fe-2S]-[ferredoxin] + ATP + H(+) = [ThiI sulfur-carrier protein]-L-cysteine + a 4-thiouridine in tRNA + 2 oxidized [2Fe-2S]-[ferredoxin] + AMP + diphosphate. The catalysed reaction is [ThiS sulfur-carrier protein]-C-terminal Gly-Gly-AMP + S-sulfanyl-L-cysteinyl-[cysteine desulfurase] + AH2 = [ThiS sulfur-carrier protein]-C-terminal-Gly-aminoethanethioate + L-cysteinyl-[cysteine desulfurase] + A + AMP + 2 H(+). Its pathway is cofactor biosynthesis; thiamine diphosphate biosynthesis. In terms of biological role, catalyzes the ATP-dependent transfer of a sulfur to tRNA to produce 4-thiouridine in position 8 of tRNAs, which functions as a near-UV photosensor. Also catalyzes the transfer of sulfur to the sulfur carrier protein ThiS, forming ThiS-thiocarboxylate. This is a step in the synthesis of thiazole, in the thiamine biosynthesis pathway. The sulfur is donated as persulfide by IscS. This chain is Probable tRNA sulfurtransferase, found in Streptococcus equi subsp. equi (strain 4047).